The primary structure comprises 650 residues: Threonine--tRNA ligase (650 aa).

Residues 3 to 65 (DLVKVTLPDG…DRDARLEIVT (63 aa)) enclose the TGS domain. The catalytic stretch occupies residues 248–548 (DHRRLGPQLG…LTEHYAGAFP (301 aa)). Cys-349, His-400, and His-525 together coordinate Zn(2+).

Belongs to the class-II aminoacyl-tRNA synthetase family. In terms of assembly, homodimer. It depends on Zn(2+) as a cofactor.

Its subcellular location is the cytoplasm. It catalyses the reaction tRNA(Thr) + L-threonine + ATP = L-threonyl-tRNA(Thr) + AMP + diphosphate + H(+). Its function is as follows. Catalyzes the attachment of threonine to tRNA(Thr) in a two-step reaction: L-threonine is first activated by ATP to form Thr-AMP and then transferred to the acceptor end of tRNA(Thr). Also edits incorrectly charged L-seryl-tRNA(Thr). This Anaeromyxobacter dehalogenans (strain 2CP-C) protein is Threonine--tRNA ligase.